The following is a 430-amino-acid chain: Lipoyl synthase, mitochondrial (430 aa).

Residues 1 to 37 (MATSAGKLRTLYSAHSSLSSLPPSARPTLQLATLRSY) constitute a mitochondrion transit peptide. The segment covering 39 to 55 (TTTPHDSPIGNTSNTPP) has biased composition (polar residues). The segment at 39-59 (TTTPHDSPIGNTSNTPPTVKR) is disordered. Residues Cys-141, Cys-146, Cys-152, Cys-172, Cys-176, Cys-179, and Ser-387 each coordinate [4Fe-4S] cluster. The Radical SAM core domain occupies 155 to 376 (GSSKSAATAT…KERALEMGFL (222 aa)).

This sequence belongs to the radical SAM superfamily. Lipoyl synthase family. [4Fe-4S] cluster serves as cofactor.

It is found in the mitochondrion. The enzyme catalyses [[Fe-S] cluster scaffold protein carrying a second [4Fe-4S](2+) cluster] + N(6)-octanoyl-L-lysyl-[protein] + 2 oxidized [2Fe-2S]-[ferredoxin] + 2 S-adenosyl-L-methionine + 4 H(+) = [[Fe-S] cluster scaffold protein] + N(6)-[(R)-dihydrolipoyl]-L-lysyl-[protein] + 4 Fe(3+) + 2 hydrogen sulfide + 2 5'-deoxyadenosine + 2 L-methionine + 2 reduced [2Fe-2S]-[ferredoxin]. It participates in protein modification; protein lipoylation via endogenous pathway; protein N(6)-(lipoyl)lysine from octanoyl-[acyl-carrier-protein]: step 2/2. Catalyzes the radical-mediated insertion of two sulfur atoms into the C-6 and C-8 positions of the octanoyl moiety bound to the lipoyl domains of lipoate-dependent enzymes, thereby converting the octanoylated domains into lipoylated derivatives. This is Lipoyl synthase, mitochondrial from Ajellomyces capsulatus (strain H143) (Darling's disease fungus).